Reading from the N-terminus, the 463-residue chain is Nuclear hormone receptor family member nhr-79 (463 aa).

Residues 3-81 (RGKCMVCDSP…AGMMRDLVQA (79 aa)) constitute a DNA-binding region (nuclear receptor). 2 NR C4-type zinc fingers span residues 6 to 27 (CMVC…CKAC) and 43 to 64 (CLGD…CRHC). The interval 83 to 119 (REIKSDKGKNSRNSSQSEDFFSPPPEQPGPSNYFDQF) is disordered. The NR LBD domain maps to 203–463 (YTEQVINLNM…ILKDMLKFQY (261 aa)).

This sequence belongs to the nuclear hormone receptor family.

The protein localises to the nucleus. Functionally, orphan nuclear receptor. This is Nuclear hormone receptor family member nhr-79 (nhr-79) from Caenorhabditis elegans.